The following is a 72-amino-acid chain: Protein kish (72 aa).

The signal sequence occupies residues 1-26 (MVAIFNFQSLLVVILLFICTCTYIRG). Residues 27–47 (SYPSLLEVRDKHSFSGLPRKA) lie on the Extracellular side of the membrane. Residues 48-68 (AIIGERLSPWVSACCLIMGLW) traverse the membrane as a helical segment. The Cytoplasmic segment spans residues 69-72 (TLYN).

Belongs to the KISH family.

It localises to the golgi apparatus membrane. Involved in the early part of the secretory pathway. This chain is Protein kish (tmem167), found in Dictyostelium discoideum (Social amoeba).